Reading from the N-terminus, the 110-residue chain is Quaternary ammonium compound-resistance protein QacF (110 aa).

4 consecutive transmembrane segments (helical) span residues 1–21 (MKNW…TSAL), 31–51 (VPSV…SLAL), 58–78 (IAYA…AWIF), and 85–105 (FWAF…NLLS).

Belongs to the drug/metabolite transporter (DMT) superfamily. Small multidrug resistance (SMR) (TC 2.A.7.1) family.

The protein localises to the cell membrane. In terms of biological role, multidrug exporter. Is implicated for the resistance to bacteriocidal quaternary ammonium compounds. The protein is Quaternary ammonium compound-resistance protein QacF (qacF) of Klebsiella aerogenes (Enterobacter aerogenes).